A 398-amino-acid chain; its full sequence is 1-deoxy-D-xylulose 5-phosphate reductoisomerase (398 aa).

Residues Thr11, Gly12, Ser13, Ile14, and Asn125 each coordinate NADPH. Lys126 contacts 1-deoxy-D-xylulose 5-phosphate. NADPH is bound at residue Glu127. Asp151 serves as a coordination point for Mn(2+). Positions 152, 153, 186, and 209 each coordinate 1-deoxy-D-xylulose 5-phosphate. Glu153 is a Mn(2+) binding site. Gly215 is a binding site for NADPH. 4 residues coordinate 1-deoxy-D-xylulose 5-phosphate: Ser222, Asn227, Lys228, and Glu231. Mn(2+) is bound at residue Glu231.

It belongs to the DXR family. Mg(2+) serves as cofactor. It depends on Mn(2+) as a cofactor.

The enzyme catalyses 2-C-methyl-D-erythritol 4-phosphate + NADP(+) = 1-deoxy-D-xylulose 5-phosphate + NADPH + H(+). It functions in the pathway isoprenoid biosynthesis; isopentenyl diphosphate biosynthesis via DXP pathway; isopentenyl diphosphate from 1-deoxy-D-xylulose 5-phosphate: step 1/6. Catalyzes the NADPH-dependent rearrangement and reduction of 1-deoxy-D-xylulose-5-phosphate (DXP) to 2-C-methyl-D-erythritol 4-phosphate (MEP). This chain is 1-deoxy-D-xylulose 5-phosphate reductoisomerase, found in Acinetobacter baumannii (strain ATCC 17978 / DSM 105126 / CIP 53.77 / LMG 1025 / NCDC KC755 / 5377).